The following is a 180-amino-acid chain: Membrane protein UL121 (180 aa).

The N-terminal stretch at 1 to 27 is a signal peptide; sequence MWGCGWSRILVLLLLMCMALMARGTYG. The chain crosses the membrane as a helical span at residues 143-163; the sequence is LGLLYAVCLILSFSIVTAALW.

Belongs to the HHV-5 UL121 protein family.

The protein localises to the host membrane. The sequence is that of Membrane protein UL121 (UL121) from Human cytomegalovirus (strain Merlin) (HHV-5).